The primary structure comprises 405 residues: Probable tRNA sulfurtransferase (405 aa).

A THUMP domain is found at 60 to 165; the sequence is EGVIERLRHV…QDAIYLTNQV (106 aa). ATP contacts are provided by residues 183–184, 208–209, arginine 265, glycine 287, and glutamine 296; these read ML and HF.

The protein belongs to the ThiI family.

The protein localises to the cytoplasm. The catalysed reaction is [ThiI sulfur-carrier protein]-S-sulfanyl-L-cysteine + a uridine in tRNA + 2 reduced [2Fe-2S]-[ferredoxin] + ATP + H(+) = [ThiI sulfur-carrier protein]-L-cysteine + a 4-thiouridine in tRNA + 2 oxidized [2Fe-2S]-[ferredoxin] + AMP + diphosphate. It catalyses the reaction [ThiS sulfur-carrier protein]-C-terminal Gly-Gly-AMP + S-sulfanyl-L-cysteinyl-[cysteine desulfurase] + AH2 = [ThiS sulfur-carrier protein]-C-terminal-Gly-aminoethanethioate + L-cysteinyl-[cysteine desulfurase] + A + AMP + 2 H(+). The protein operates within cofactor biosynthesis; thiamine diphosphate biosynthesis. Functionally, catalyzes the ATP-dependent transfer of a sulfur to tRNA to produce 4-thiouridine in position 8 of tRNAs, which functions as a near-UV photosensor. Also catalyzes the transfer of sulfur to the sulfur carrier protein ThiS, forming ThiS-thiocarboxylate. This is a step in the synthesis of thiazole, in the thiamine biosynthesis pathway. The sulfur is donated as persulfide by IscS. The sequence is that of Probable tRNA sulfurtransferase from Latilactobacillus sakei subsp. sakei (strain 23K) (Lactobacillus sakei subsp. sakei).